The sequence spans 234 residues: Geranylgeranylglyceryl phosphate synthase (234 aa).

Mg(2+)-binding residues include Asp24 and Ser52. Sn-glycerol 1-phosphate contacts are provided by residues 172-178 (YLEAGSG), 203-204 (GG), and 225-226 (GT).

It belongs to the GGGP/HepGP synthase family. Group II subfamily. As to quaternary structure, homodimer. Mg(2+) serves as cofactor.

It catalyses the reaction sn-glycerol 1-phosphate + (2E,6E,10E)-geranylgeranyl diphosphate = sn-3-O-(geranylgeranyl)glycerol 1-phosphate + diphosphate. Functionally, prenyltransferase that catalyzes the transfer of the geranylgeranyl moiety of geranylgeranyl diphosphate (GGPP) to the C3 hydroxyl of sn-glycerol-1-phosphate (G1P). The sequence is that of Geranylgeranylglyceryl phosphate synthase from Zunongwangia profunda (strain DSM 18752 / CCTCC AB 206139 / SM-A87) (Wangia profunda).